The primary structure comprises 751 residues: Photosystem I P700 chlorophyll a apoprotein A1 (751 aa).

The next 8 helical transmembrane spans lie at 73–96 (VFSA…FHGA), 159–182 (LYAT…FHYH), 198–222 (MNHH…HISL), 294–312 (EAHH…GHQY), 349–372 (WHAQ…HHMY), 388–414 (LSLF…IFMV), 436–458 (AIIS…LYIH), and 533–551 (FLVH…LILL). Residues cysteine 575 and cysteine 584 each contribute to the [4Fe-4S] cluster site. Transmembrane regions (helical) follow at residues 591-612 (HVFL…HFSW) and 665-687 (LSAY…MFLF). Histidine 676 contributes to the chlorophyll a' binding site. Residues methionine 684 and tyrosine 692 each coordinate chlorophyll a. A phylloquinone-binding site is contributed by tryptophan 693. A helical transmembrane segment spans residues 725 to 745 (AVGVAHYLLGGIATTWSFFLA).

Belongs to the PsaA/PsaB family. In terms of assembly, the PsaA/B heterodimer binds the P700 chlorophyll special pair and subsequent electron acceptors. PSI consists of a core antenna complex that captures photons, and an electron transfer chain that converts photonic excitation into a charge separation. The eukaryotic PSI reaction center is composed of at least 11 subunits. It depends on P700 is a chlorophyll a/chlorophyll a' dimer, A0 is one or more chlorophyll a, A1 is one or both phylloquinones and FX is a shared 4Fe-4S iron-sulfur center. as a cofactor.

The protein localises to the plastid. Its subcellular location is the chloroplast thylakoid membrane. The catalysed reaction is reduced [plastocyanin] + hnu + oxidized [2Fe-2S]-[ferredoxin] = oxidized [plastocyanin] + reduced [2Fe-2S]-[ferredoxin]. Functionally, psaA and PsaB bind P700, the primary electron donor of photosystem I (PSI), as well as the electron acceptors A0, A1 and FX. PSI is a plastocyanin/cytochrome c6-ferredoxin oxidoreductase, converting photonic excitation into a charge separation, which transfers an electron from the donor P700 chlorophyll pair to the spectroscopically characterized acceptors A0, A1, FX, FA and FB in turn. Oxidized P700 is reduced on the lumenal side of the thylakoid membrane by plastocyanin or cytochrome c6. The chain is Photosystem I P700 chlorophyll a apoprotein A1 from Oltmannsiellopsis viridis (Marine flagellate).